Reading from the N-terminus, the 300-residue chain is Acetaldehyde dehydrogenase (300 aa).

Position 10–13 (serine 10–isoleucine 13) interacts with NAD(+). The active-site Acyl-thioester intermediate is cysteine 129. NAD(+) is bound by residues serine 160–asparagine 168 and asparagine 271.

This sequence belongs to the acetaldehyde dehydrogenase family.

The catalysed reaction is acetaldehyde + NAD(+) + CoA = acetyl-CoA + NADH + H(+). In Alkalilimnicola ehrlichii (strain ATCC BAA-1101 / DSM 17681 / MLHE-1), this protein is Acetaldehyde dehydrogenase.